The sequence spans 214 residues: tRNA (guanine-N(7)-)-methyltransferase (214 aa).

S-adenosyl-L-methionine contacts are provided by Glu43, Glu68, Asp95, and Asp117. Residue Asp117 is part of the active site. Residues Lys121, Asp153, and 190–193 (TEYE) each bind substrate.

It belongs to the class I-like SAM-binding methyltransferase superfamily. TrmB family.

It catalyses the reaction guanosine(46) in tRNA + S-adenosyl-L-methionine = N(7)-methylguanosine(46) in tRNA + S-adenosyl-L-homocysteine. Its pathway is tRNA modification; N(7)-methylguanine-tRNA biosynthesis. Functionally, catalyzes the formation of N(7)-methylguanine at position 46 (m7G46) in tRNA. This is tRNA (guanine-N(7)-)-methyltransferase from Staphylococcus aureus (strain Mu3 / ATCC 700698).